We begin with the raw amino-acid sequence, 764 residues long: Myotubularin-related protein 10-B (764 aa).

Positions 208 to 649 constitute a Myotubularin phosphatase domain; sequence FESYSDWDRE…THIQIWKLCY (442 aa).

It belongs to the protein-tyrosine phosphatase family. Non-receptor class myotubularin subfamily.

This chain is Myotubularin-related protein 10-B (mtmr10-b), found in Xenopus laevis (African clawed frog).